A 124-amino-acid chain; its full sequence is Fluoride-specific ion channel FluC (124 aa).

The next 4 membrane-spanning stretches (helical) occupy residues 4 to 24, 32 to 52, 67 to 87, and 96 to 116; these read IVAI…LAGW, GFPY…GLIM, IGLT…SYET, and FITA…CTWL. Residues glycine 75 and threonine 78 each contribute to the Na(+) site.

It belongs to the fluoride channel Fluc/FEX (TC 1.A.43) family.

It localises to the cell inner membrane. It catalyses the reaction fluoride(in) = fluoride(out). Na(+) is not transported, but it plays an essential structural role and its presence is essential for fluoride channel function. Its function is as follows. Fluoride-specific ion channel. Important for reducing fluoride concentration in the cell, thus reducing its toxicity. This is Fluoride-specific ion channel FluC from Geobacter metallireducens (strain ATCC 53774 / DSM 7210 / GS-15).